Reading from the N-terminus, the 222-residue chain is Germin-like protein 11-1 (222 aa).

An N-terminal signal peptide occupies residues 1–23; it reads MKLSTVLCCYLLLLGLFAPEIIS. A disulfide bond links cysteine 32 and cysteine 49. The Cupin type-1 domain occupies 72–195; that stretch reads DNMVRSSANI…AMFAPDSEVA (124 aa). Residues histidine 111, histidine 113, glutamate 118, and histidine 157 each coordinate Mn(2+).

It belongs to the germin family. Oligomer (believed to be a pentamer but probably hexamer).

Its subcellular location is the secreted. The protein localises to the extracellular space. It localises to the apoplast. In terms of biological role, may play a role in plant defense. Probably has no oxalate oxidase activity even if the active site is conserved. This Oryza sativa subsp. japonica (Rice) protein is Germin-like protein 11-1.